The chain runs to 310 residues: tRNA-cytidine(32) 2-sulfurtransferase (310 aa).

Positions Ser45 to Ser50 match the PP-loop motif motif. [4Fe-4S] cluster contacts are provided by Cys120, Cys123, and Cys211.

Belongs to the TtcA family. In terms of assembly, homodimer. Mg(2+) is required as a cofactor. [4Fe-4S] cluster serves as cofactor.

The protein resides in the cytoplasm. It carries out the reaction cytidine(32) in tRNA + S-sulfanyl-L-cysteinyl-[cysteine desulfurase] + AH2 + ATP = 2-thiocytidine(32) in tRNA + L-cysteinyl-[cysteine desulfurase] + A + AMP + diphosphate + H(+). The protein operates within tRNA modification. Functionally, catalyzes the ATP-dependent 2-thiolation of cytidine in position 32 of tRNA, to form 2-thiocytidine (s(2)C32). The sulfur atoms are provided by the cysteine/cysteine desulfurase (IscS) system. The protein is tRNA-cytidine(32) 2-sulfurtransferase of Shewanella oneidensis (strain ATCC 700550 / JCM 31522 / CIP 106686 / LMG 19005 / NCIMB 14063 / MR-1).